A 275-amino-acid polypeptide reads, in one-letter code: Elongation factor Ts (275 aa).

Positions 80–83 are involved in Mg(2+) ion dislocation from EF-Tu; the sequence is TDFV.

This sequence belongs to the EF-Ts family.

The protein localises to the cytoplasm. Its function is as follows. Associates with the EF-Tu.GDP complex and induces the exchange of GDP to GTP. It remains bound to the aminoacyl-tRNA.EF-Tu.GTP complex up to the GTP hydrolysis stage on the ribosome. The sequence is that of Elongation factor Ts from Clavibacter michiganensis subsp. michiganensis (strain NCPPB 382).